The primary structure comprises 398 residues: Methionine import ATP-binding protein MetN 2 (398 aa).

Positions Val-43–Leu-282 constitute an ABC transporter domain. Gly-79 to Ser-86 serves as a coordination point for ATP.

The protein belongs to the ABC transporter superfamily. Methionine importer (TC 3.A.1.24) family. In terms of assembly, the complex is composed of two ATP-binding proteins (MetN), two transmembrane proteins (MetI) and a solute-binding protein (MetQ).

The protein resides in the cell inner membrane. The catalysed reaction is L-methionine(out) + ATP + H2O = L-methionine(in) + ADP + phosphate + H(+). It catalyses the reaction D-methionine(out) + ATP + H2O = D-methionine(in) + ADP + phosphate + H(+). In terms of biological role, part of the ABC transporter complex MetNIQ involved in methionine import. Responsible for energy coupling to the transport system. The protein is Methionine import ATP-binding protein MetN 2 of Burkholderia lata (strain ATCC 17760 / DSM 23089 / LMG 22485 / NCIMB 9086 / R18194 / 383).